The primary structure comprises 217 residues: Small ribosomal subunit protein uS3 (217 aa).

Positions 38–106 constitute a KH type-2 domain; the sequence is IRKFIDNELK…KVHINVIEIK (69 aa).

This sequence belongs to the universal ribosomal protein uS3 family. In terms of assembly, part of the 30S ribosomal subunit. Forms a tight complex with proteins S10 and S14.

Binds the lower part of the 30S subunit head. Binds mRNA in the 70S ribosome, positioning it for translation. This is Small ribosomal subunit protein uS3 (rpsC) from Staphylococcus aureus (strain COL).